The primary structure comprises 571 residues: Proline--tRNA ligase (571 aa).

This sequence belongs to the class-II aminoacyl-tRNA synthetase family. ProS type 1 subfamily. As to quaternary structure, homodimer.

The protein resides in the cytoplasm. The catalysed reaction is tRNA(Pro) + L-proline + ATP = L-prolyl-tRNA(Pro) + AMP + diphosphate. Its function is as follows. Catalyzes the attachment of proline to tRNA(Pro) in a two-step reaction: proline is first activated by ATP to form Pro-AMP and then transferred to the acceptor end of tRNA(Pro). As ProRS can inadvertently accommodate and process non-cognate amino acids such as alanine and cysteine, to avoid such errors it has two additional distinct editing activities against alanine. One activity is designated as 'pretransfer' editing and involves the tRNA(Pro)-independent hydrolysis of activated Ala-AMP. The other activity is designated 'posttransfer' editing and involves deacylation of mischarged Ala-tRNA(Pro). The misacylated Cys-tRNA(Pro) is not edited by ProRS. The chain is Proline--tRNA ligase from Shewanella baltica (strain OS185).